The primary structure comprises 491 residues: MLIFEKSRKNRRTLAHAIADKMDANDIPANLLRHDAPRLPELSELEVVRHFTRLSRQNFSIDTHFYPLGSCTMKYNPRAANRLASLPGYLKRHPLSPAPQSQAFLQCLYELQTMLTEITGMEKISLTSMAGAQGEFAGVAMIKAYHESRGDYDRTEMIVPDAAHGTNPASAAMCGFTVKEISTTKDGDIDLEKLRQMAGAKTAGIMLTNPSTLGVFERQISEVAKIIHNAGGLLYYDGANLNAILGKYRPGDMGFDVMHLNLHKTFATPHGGGGPGAGPVAAGPRLSKFLPVPMVGKNKEGYDWLTEKECPKSIGRLSAFMGNSGVLLRAYIYLRLLGKEGLSRVAEFSTLNANYLMKRLEQLGFTLAFPNRRASHEFIITLKPLTRAYGVTALDIAKRLLDYGFHAPTIYFPLLVPECLLIEPTETESKQTLDHFIEAMEKILTEIKTTPDLLRNAPHQQLINRLDEVKAARELDLRWYPIAKETEIFIQ.

An N6-(pyridoxal phosphate)lysine modification is found at Lys264.

It belongs to the GcvP family. C-terminal subunit subfamily. The glycine cleavage system is composed of four proteins: P, T, L and H. In this organism, the P 'protein' is a heterodimer of two subunits. Pyridoxal 5'-phosphate is required as a cofactor.

The catalysed reaction is N(6)-[(R)-lipoyl]-L-lysyl-[glycine-cleavage complex H protein] + glycine + H(+) = N(6)-[(R)-S(8)-aminomethyldihydrolipoyl]-L-lysyl-[glycine-cleavage complex H protein] + CO2. Functionally, the glycine cleavage system catalyzes the degradation of glycine. The P protein binds the alpha-amino group of glycine through its pyridoxal phosphate cofactor; CO(2) is released and the remaining methylamine moiety is then transferred to the lipoamide cofactor of the H protein. This Coxiella burnetii (strain CbuG_Q212) (Coxiella burnetii (strain Q212)) protein is Probable glycine dehydrogenase (decarboxylating) subunit 2.